We begin with the raw amino-acid sequence, 1019 residues long: Sca1 complex protein phr (1019 aa).

Disordered regions lie at residues 89 to 118 (IVIN…SSNF), 131 to 202 (AFNN…INNN), 265 to 287 (QQLN…NSAN), and 512 to 546 (STNN…TNNL). Residues 93-102 (SSSSSSSSSS) are compositionally biased toward low complexity. Over residues 141–155 (NRKEKEKDKDKDHQD) the composition is skewed to basic and acidic residues. Residues 158 to 188 (NINNINNINNNINNNINNNNNNNNNNNNNNN) are a coiled coil. Residues 158–202 (NINNINNINNNINNNINNNNNNNNNNNNNNNMHNPTSSSPSINNN) are compositionally biased toward low complexity. Positions 735-836 (EIKKKGYLFK…WIKAIKFNCF (102 aa)) constitute a PH domain. A compositionally biased stretch (low complexity) spans 860–872 (VAGSGSNNGNNNG). 3 disordered regions span residues 860 to 890 (VAGS…GSFI), 904 to 951 (NLSI…QQQL), and 977 to 1019 (SSYT…SKLK). Residues 879 to 890 (TTQQLNNSGSFI) are compositionally biased toward polar residues. Residues 977-986 (SSYTDSMSGS) show a composition bias toward low complexity. Over residues 987-1019 (PPDSNGQVFPQSPQLKKTLFQRTTSFSKGSKLK) the composition is skewed to polar residues.

Component of the Sca1 complex composed of at least gefA, gefH, scaA, phr, and the protein phosphatase 2A subunits pppA and pho2B. Interacts directly with gefH.

The protein localises to the cell membrane. Its function is as follows. Component of the Sca1 complex, a regulator of cell motility, chemotaxis and signal relay. The Sca1 complex is recruited to the plasma membrane in a chemoattractant- and F-actin-dependent manner and is enriched at the leading edge of chemotaxing cells where it regulates F-actin dynamics and signal relay by controlling the activation of rasC and the downstream target of rapamycin complex 2 (TORC2)-Akt/protein kinase B (PKB) pathway. The chain is Sca1 complex protein phr from Dictyostelium discoideum (Social amoeba).